The following is a 207-amino-acid chain: Large ribosomal subunit protein uL4 (207 aa).

Residues 49–78 (HAVKNRSAVSGGGRKPWRQKGTGRARQGSI) are disordered.

It belongs to the universal ribosomal protein uL4 family. In terms of assembly, part of the 50S ribosomal subunit.

Its function is as follows. One of the primary rRNA binding proteins, this protein initially binds near the 5'-end of the 23S rRNA. It is important during the early stages of 50S assembly. It makes multiple contacts with different domains of the 23S rRNA in the assembled 50S subunit and ribosome. In terms of biological role, forms part of the polypeptide exit tunnel. The sequence is that of Large ribosomal subunit protein uL4 from Streptococcus suis (strain 98HAH33).